Here is a 494-residue protein sequence, read N- to C-terminus: Probable cytosol aminopeptidase (494 aa).

2 residues coordinate Mn(2+): Lys-260 and Asp-265. Lys-272 is a catalytic residue. Positions 283, 342, and 344 each coordinate Mn(2+). The active site involves Arg-346.

This sequence belongs to the peptidase M17 family. Requires Mn(2+) as cofactor.

The protein resides in the cytoplasm. The enzyme catalyses Release of an N-terminal amino acid, Xaa-|-Yaa-, in which Xaa is preferably Leu, but may be other amino acids including Pro although not Arg or Lys, and Yaa may be Pro. Amino acid amides and methyl esters are also readily hydrolyzed, but rates on arylamides are exceedingly low.. It carries out the reaction Release of an N-terminal amino acid, preferentially leucine, but not glutamic or aspartic acids.. Functionally, presumably involved in the processing and regular turnover of intracellular proteins. Catalyzes the removal of unsubstituted N-terminal amino acids from various peptides. This chain is Probable cytosol aminopeptidase, found in Bacillus cereus (strain Q1).